Here is a 490-residue protein sequence, read N- to C-terminus: Phosphoglucosamine mutase (490 aa).

Ser-139 acts as the Phosphoserine intermediate in catalysis. Positions 139, 279, 281, and 283 each coordinate Mg(2+). Residue Ser-139 is modified to Phosphoserine.

Belongs to the phosphohexose mutase family. Requires Mg(2+) as cofactor. Post-translationally, activated by phosphorylation.

The enzyme catalyses alpha-D-glucosamine 1-phosphate = D-glucosamine 6-phosphate. In terms of biological role, catalyzes the conversion of glucosamine-6-phosphate to glucosamine-1-phosphate. The sequence is that of Phosphoglucosamine mutase from Trichormus variabilis (strain ATCC 29413 / PCC 7937) (Anabaena variabilis).